The primary structure comprises 169 residues: Unfolded protein response-inducible protein 1 (169 aa).

Its function is as follows. Involved in the unfolded protein response (UPR), a transcriptional response which up-regulates genes that enable cells to cope with misfolded, endoplasmic reticulum-retained proteins. UPR is part of the endoplasmic reticulum quality control (ERQC) which prevents the exit of misfolded secretory and membrane proteins from the endoplasmic reticulum. The protein is Unfolded protein response-inducible protein 1 (ULI1) of Saccharomyces cerevisiae (strain ATCC 204508 / S288c) (Baker's yeast).